A 105-amino-acid polypeptide reads, in one-letter code: Ig lambda-1 chain C region (105 aa).

The Ig-like domain maps to 6-100 (PSVTLFPPSS…EGHTVEKSLS (95 aa)). Residues Cys27 and Cys86 are joined by a disulfide bond.

In Mus musculus (Mouse), this protein is Ig lambda-1 chain C region.